Consider the following 255-residue polypeptide: Aliphatic sulfonates import ATP-binding protein SsuB (255 aa).

The 227-residue stretch at 5 to 231 folds into the ABC transporter domain; it reads IRVNEKAFGK…PRSRTSPVFQ (227 aa). ATP is bound at residue 39 to 46; sequence GPSGCGKS.

This sequence belongs to the ABC transporter superfamily. Aliphatic sulfonates importer (TC 3.A.1.17.2) family. As to quaternary structure, the complex is composed of two ATP-binding proteins (SsuB), two transmembrane proteins (SsuC) and a solute-binding protein (SsuA).

The protein resides in the cell membrane. The enzyme catalyses ATP + H2O + aliphatic sulfonate-[sulfonate-binding protein]Side 1 = ADP + phosphate + aliphatic sulfonateSide 2 + [sulfonate-binding protein]Side 1.. In terms of biological role, part of the ABC transporter complex SsuABC involved in aliphatic sulfonates import. Responsible for energy coupling to the transport system. The chain is Aliphatic sulfonates import ATP-binding protein SsuB from Bacillus licheniformis (strain ATCC 14580 / DSM 13 / JCM 2505 / CCUG 7422 / NBRC 12200 / NCIMB 9375 / NCTC 10341 / NRRL NRS-1264 / Gibson 46).